Reading from the N-terminus, the 300-residue chain is GTPase Era (300 aa).

One can recognise an Era-type G domain in the interval 8 to 176 (RCGYVAIVGR…EALIAKHLPE (169 aa)). The G1 stretch occupies residues 16-23 (GRPNVGKS). 16–23 (GRPNVGKS) serves as a coordination point for GTP. Residues 42 to 46 (QTTRH) form a G2 region. The segment at 63–66 (DTPG) is G3. Residues 63–67 (DTPGM) and 125–128 (NKTD) each bind GTP. Residues 125 to 128 (NKTD) are G4. The segment at 155-157 (ISA) is G5. Residues 199 to 283 (VREKIMRQLG…MLNLWVKVKG (85 aa)) form the KH type-2 domain.

The protein belongs to the TRAFAC class TrmE-Era-EngA-EngB-Septin-like GTPase superfamily. Era GTPase family. As to quaternary structure, monomer.

The protein localises to the cytoplasm. Its subcellular location is the cell inner membrane. Functionally, an essential GTPase that binds both GDP and GTP, with rapid nucleotide exchange. Plays a role in 16S rRNA processing and 30S ribosomal subunit biogenesis and possibly also in cell cycle regulation and energy metabolism. The protein is GTPase Era of Pseudomonas putida (strain W619).